Consider the following 227-residue polypeptide: Cytochrome c oxidase subunit 2 (227 aa).

Residues 1–14 (MAYPMQLGFQDATS) lie on the Mitochondrial intermembrane side of the membrane. A helical transmembrane segment spans residues 15 to 45 (PIMEELLHFHDHTLMIVFLISSLVLYIISLM). Residues 46–59 (LTTKLTHTSTMDAQ) lie on the Mitochondrial matrix side of the membrane. A helical membrane pass occupies residues 60–87 (EVETIWTILPAIILILIALPSLRILYMM). At 88 to 227 (DEINNPSLTV…YFEKWSASML (140 aa)) the chain is on the mitochondrial intermembrane side. 6 residues coordinate Cu cation: His161, Cys196, Glu198, Cys200, His204, and Met207. Glu198 lines the Mg(2+) pocket. Tyr218 carries the phosphotyrosine modification.

This sequence belongs to the cytochrome c oxidase subunit 2 family. As to quaternary structure, component of the cytochrome c oxidase (complex IV, CIV), a multisubunit enzyme composed of 14 subunits. The complex is composed of a catalytic core of 3 subunits MT-CO1, MT-CO2 and MT-CO3, encoded in the mitochondrial DNA, and 11 supernumerary subunits COX4I, COX5A, COX5B, COX6A, COX6B, COX6C, COX7A, COX7B, COX7C, COX8 and NDUFA4, which are encoded in the nuclear genome. The complex exists as a monomer or a dimer and forms supercomplexes (SCs) in the inner mitochondrial membrane with NADH-ubiquinone oxidoreductase (complex I, CI) and ubiquinol-cytochrome c oxidoreductase (cytochrome b-c1 complex, complex III, CIII), resulting in different assemblies (supercomplex SCI(1)III(2)IV(1) and megacomplex MCI(2)III(2)IV(2)). Found in a complex with TMEM177, COA6, COX18, COX20, SCO1 and SCO2. Interacts with TMEM177 in a COX20-dependent manner. Interacts with COX20. Interacts with COX16. Cu cation is required as a cofactor.

The protein localises to the mitochondrion inner membrane. It catalyses the reaction 4 Fe(II)-[cytochrome c] + O2 + 8 H(+)(in) = 4 Fe(III)-[cytochrome c] + 2 H2O + 4 H(+)(out). In terms of biological role, component of the cytochrome c oxidase, the last enzyme in the mitochondrial electron transport chain which drives oxidative phosphorylation. The respiratory chain contains 3 multisubunit complexes succinate dehydrogenase (complex II, CII), ubiquinol-cytochrome c oxidoreductase (cytochrome b-c1 complex, complex III, CIII) and cytochrome c oxidase (complex IV, CIV), that cooperate to transfer electrons derived from NADH and succinate to molecular oxygen, creating an electrochemical gradient over the inner membrane that drives transmembrane transport and the ATP synthase. Cytochrome c oxidase is the component of the respiratory chain that catalyzes the reduction of oxygen to water. Electrons originating from reduced cytochrome c in the intermembrane space (IMS) are transferred via the dinuclear copper A center (CU(A)) of subunit 2 and heme A of subunit 1 to the active site in subunit 1, a binuclear center (BNC) formed by heme A3 and copper B (CU(B)). The BNC reduces molecular oxygen to 2 water molecules using 4 electrons from cytochrome c in the IMS and 4 protons from the mitochondrial matrix. The sequence is that of Cytochrome c oxidase subunit 2 (MT-CO2) from Boselaphus tragocamelus (Nilgai).